We begin with the raw amino-acid sequence, 602 residues long: Major facilitator superfamily multidrug transporter mfsB (602 aa).

12 helical membrane-spanning segments follow: residues Phe-29–Val-49, Leu-67–Trp-87, Pro-98–Pro-118, Ala-128–Val-148, Ile-160–Ala-180, Phe-201–Leu-221, Ile-329–Phe-349, Phe-378–Val-398, Val-411–Ile-431, Leu-439–Leu-459, Val-468–Leu-486, and Ile-505–Met-525. The disordered stretch occupies residues Glu-527 to Asp-602. Residues Ser-528–Gly-538 show a composition bias toward basic and acidic residues.

Belongs to the major facilitator superfamily.

The protein localises to the membrane. Its function is as follows. Major facilitator superfamily transporter that may be involved in A.fumigatus adaptation to azoles such as vorizonazole. The chain is Major facilitator superfamily multidrug transporter mfsB from Aspergillus fumigatus (strain ATCC MYA-4609 / CBS 101355 / FGSC A1100 / Af293) (Neosartorya fumigata).